Consider the following 494-residue polypeptide: Trigger factor (494 aa).

The PPIase FKBP-type domain maps to 169–254; sequence GDRITMDYVG…VKDVAAPGAV (86 aa). The disordered stretch occupies residues 440–494; the sequence is LLAEDEGEAKAETKKAAPKKKAAAKSEAAEAGEGEEAAPKKKAAPKKKASEDSAE.

The protein belongs to the FKBP-type PPIase family. Tig subfamily.

It localises to the cytoplasm. The catalysed reaction is [protein]-peptidylproline (omega=180) = [protein]-peptidylproline (omega=0). Functionally, involved in protein export. Acts as a chaperone by maintaining the newly synthesized protein in an open conformation. Functions as a peptidyl-prolyl cis-trans isomerase. The polypeptide is Trigger factor (Rhizobium etli (strain ATCC 51251 / DSM 11541 / JCM 21823 / NBRC 15573 / CFN 42)).